A 371-amino-acid chain; its full sequence is Collectin-46 (371 aa).

A signal peptide spans 1–20 (MLLLPLSVLLLLTQPWRSLG). The disordered stretch occupies residues 43 to 215 (PEGGLPGRDG…ERGAKGESGL (173 aa)). The 171-residue stretch at 46–216 (GLPGRDGQDG…RGAKGESGLA (171 aa)) folds into the Collagen-like domain. The span at 51–65 (DGQDGREGPQGEKGD) shows a compositional bias: basic and acidic residues. N-linked (GlcNAc...) asparagine glycosylation occurs at Asn90. Over residues 113–128 (PAGREGPSGKQGSMGP) the composition is skewed to low complexity. Residues 139-148 (GPKGGMGAPG) are compositionally biased toward gly residues. The segment covering 170-191 (APGSAGVAGPAGAIGPQGPSGA) has biased composition (low complexity). Positions 198–210 (KGDRGDPGERGAK) are enriched in basic and acidic residues. The Cell attachment site motif lies at 201–203 (RGD). Residues 273 to 371 (QLCREAKGQL…SEPLLVICEF (99 aa)) enclose the C-type lectin domain. 2 disulfides stabilise this stretch: Cys275–Cys369 and Cys347–Cys361.

The protein belongs to the SFTPD family. As to quaternary structure, oligomeric complex of 4 set of homotrimers. Hydroxylated. In terms of tissue distribution, highly expressed in thymus and liver.

The protein resides in the secreted. This chain is Collectin-46 (CL46), found in Bos taurus (Bovine).